A 418-amino-acid polypeptide reads, in one-letter code: Histidinol dehydrogenase (418 aa).

Residues Y119, Q180, and N203 each contribute to the NAD(+) site. Substrate-binding residues include T226, Q248, and H251. 2 residues coordinate Zn(2+): Q248 and H251. Residues E316 and H317 each act as proton acceptor in the active site. Substrate-binding residues include H317, D350, E404, and H409. D350 is a Zn(2+) binding site. Position 409 (H409) interacts with Zn(2+).

This sequence belongs to the histidinol dehydrogenase family. It depends on Zn(2+) as a cofactor.

The enzyme catalyses L-histidinol + 2 NAD(+) + H2O = L-histidine + 2 NADH + 3 H(+). The protein operates within amino-acid biosynthesis; L-histidine biosynthesis; L-histidine from 5-phospho-alpha-D-ribose 1-diphosphate: step 9/9. Functionally, catalyzes the sequential NAD-dependent oxidations of L-histidinol to L-histidinaldehyde and then to L-histidine. The polypeptide is Histidinol dehydrogenase (Staphylococcus aureus (strain MSSA476)).